A 1076-amino-acid chain; its full sequence is Bifunctional glutamine synthetase adenylyltransferase/adenylyl-removing enzyme (1076 aa).

Positions 1–521 (MESSIFKPSS…LHLDIYYRPM (521 aa)) are adenylyl removase. An adenylyl transferase region spans residues 524-1076 (VNAQMENDQI…LERNRRRAQR (553 aa)). The span at 1042-1056 (TATASAATQQPQTAP) shows a compositional bias: low complexity. A disordered region spans residues 1042–1076 (TATASAATQQPQTAPRPRMHVIAPRLERNRRRAQR).

It belongs to the GlnE family. Requires Mg(2+) as cofactor.

It carries out the reaction [glutamine synthetase]-O(4)-(5'-adenylyl)-L-tyrosine + phosphate = [glutamine synthetase]-L-tyrosine + ADP. The catalysed reaction is [glutamine synthetase]-L-tyrosine + ATP = [glutamine synthetase]-O(4)-(5'-adenylyl)-L-tyrosine + diphosphate. In terms of biological role, involved in the regulation of glutamine synthetase GlnA, a key enzyme in the process to assimilate ammonia. When cellular nitrogen levels are high, the C-terminal adenylyl transferase (AT) inactivates GlnA by covalent transfer of an adenylyl group from ATP to specific tyrosine residue of GlnA, thus reducing its activity. Conversely, when nitrogen levels are low, the N-terminal adenylyl removase (AR) activates GlnA by removing the adenylyl group by phosphorolysis, increasing its activity. The regulatory region of GlnE binds the signal transduction protein PII (GlnB) which indicates the nitrogen status of the cell. The chain is Bifunctional glutamine synthetase adenylyltransferase/adenylyl-removing enzyme from Bifidobacterium longum (strain NCC 2705).